A 281-amino-acid chain; its full sequence is NAD-dependent protein deacetylase 1 (281 aa).

The Deacetylase sirtuin-type domain maps to 1 to 281 (MEEGAALEGV…FDQILDALDL (281 aa)). NAD(+)-binding positions include 24–44 (GAGV…GSLN) and 102–105 (QNVD). His-120 functions as the Proton acceptor in the catalytic mechanism. Zn(2+) is bound by residues Cys-128, Cys-131, Cys-183, and Cys-186. Residues 224 to 226 (GSS), 250 to 252 (NGG), and Val-268 contribute to the NAD(+) site.

The protein belongs to the sirtuin family. Class II subfamily. Zn(2+) serves as cofactor.

It localises to the cytoplasm. The enzyme catalyses N(6)-acetyl-L-lysyl-[protein] + NAD(+) + H2O = 2''-O-acetyl-ADP-D-ribose + nicotinamide + L-lysyl-[protein]. Functionally, NAD-dependent protein deacetylase which modulates the activities of several enzymes which are inactive in their acetylated form. The polypeptide is NAD-dependent protein deacetylase 1 (Corynebacterium efficiens (strain DSM 44549 / YS-314 / AJ 12310 / JCM 11189 / NBRC 100395)).